The sequence spans 371 residues: Carlactonoate CLA methyltransferase (371 aa).

Y21 provides a ligand contact to S-adenosyl-L-homocysteine. Residue Q28 participates in (11R)-carlactonoate binding. C62, N67, D101, L102, S141, and F142 together coordinate S-adenosyl-L-homocysteine. (11R)-carlactonoate contacts are provided by H162 and W163. The Mg(2+) site is built by N180, D266, Y268, and D269.

Belongs to the methyltransferase superfamily. Type-7 methyltransferase family. SABATH subfamily. Homodimer. Mg(2+) is required as a cofactor.

The catalysed reaction is (11R)-carlactonoate + S-adenosyl-L-methionine = (11R)-methyl carlactonoate + S-adenosyl-L-homocysteine. Methyltransferase involved in the biosynthesis of strigolactone natural products, bioactive compounds promoting plant fitness and soil microbe interactions, but preventing shoot branching. Catalyzes the biosynthesis of (11R)-methyl carlactonoate (MeCLA) from (11R)-carlactonoate (CLA), downstream of MAX1; MeCLA is probably biologically active as a hormone regulating shoot branching and serves as a precursor of non-canonical strigolactones (SLs). The protein is Carlactonoate CLA methyltransferase of Arabidopsis thaliana (Mouse-ear cress).